A 275-amino-acid chain; its full sequence is Mitochondrial fission factor homolog A (275 aa).

The Cytoplasmic portion of the chain corresponds to 1 to 255 (MAEVNRIHYE…ENKERAKREM (255 aa)). The disordered stretch occupies residues 100–171 (DFLEPEPAAN…PLISPEDSQN (72 aa)). The segment covering 114 to 130 (PREEMKSHFRSRREQCR) has biased composition (basic and acidic residues). Positions 131–142 (SENSTMRRNGQI) are enriched in polar residues. Residues 223–253 (LTDAASLRRQIIKLNRRLQLLEHENKERAKR) are a coiled coil. Residues 256 to 273 (VMYSLTVAFWLVNSWIWL) form a helical; Anchor for type IV membrane protein membrane-spanning segment. Topologically, residues 274-275 (RR) are extracellular.

It belongs to the Tango11 family.

The protein resides in the mitochondrion outer membrane. The protein localises to the peroxisome. Functionally, plays a role in mitochondrial and peroxisomal fission. Promotes the recruitment and association of the fission mediator dynamin-related protein 1 (DNM1L) to the mitochondrial surface. This is Mitochondrial fission factor homolog A from Danio rerio (Zebrafish).